The primary structure comprises 255 residues: MIRIKTPEQIDGIRASCKALARLFDVLIPLVKPGVQTQELDAFCQRFIRSVGGVPAWFSEGFPAAACISINEEVIHGLPSARVIQDGDLVSLDVGINLNGYISDACRTVPVGGVAHERLELLRVTTECLRAGIKACRAGARVRAVSRAVYAVAARHRFGVVYEYCGHGVGLAVHEEPNIPNVPGLEGPNPRFLPGMVVAIEPMLTLGTDEVRTSADGWTVVTADGSCACHVEHTVAVFADHTEVLTEPTEVERTG.

Position 76 (His-76) interacts with substrate. Residues Asp-93, Asp-104, and His-167 each coordinate a divalent metal cation. Position 174 (His-174) interacts with substrate. Glu-201 and Glu-232 together coordinate a divalent metal cation.

The protein belongs to the peptidase M24A family. Methionine aminopeptidase type 1 subfamily. Monomer. It depends on Co(2+) as a cofactor. The cofactor is Zn(2+). Mn(2+) serves as cofactor. Requires Fe(2+) as cofactor.

It catalyses the reaction Release of N-terminal amino acids, preferentially methionine, from peptides and arylamides.. In terms of biological role, removes the N-terminal methionine from nascent proteins. The N-terminal methionine is often cleaved when the second residue in the primary sequence is small and uncharged (Met-Ala-, Cys, Gly, Pro, Ser, Thr, or Val). Requires deformylation of the N(alpha)-formylated initiator methionine before it can be hydrolyzed. This Treponema pallidum (strain Nichols) protein is Methionine aminopeptidase.